The following is a 377-amino-acid chain: Lactosylceramide 1,3-N-acetyl-beta-D-glucosaminyltransferase B (377 aa).

Residues 1-13 lie on the Cytoplasmic side of the membrane; that stretch reads MLISARRLRRCQS. The helical; Signal-anchor for type II membrane protein transmembrane segment at 14 to 30 threads the bilayer; that stretch reads LQLLASCFVLSLMALLV. Topologically, residues 31–377 are lumenal; sequence QEDNSLVNHV…DTYPCSAAWS (347 aa). Residues N56, N167, and N275 are each glycosylated (N-linked (GlcNAc...) asparagine).

It belongs to the glycosyltransferase 31 family.

The protein resides in the golgi apparatus membrane. It catalyses the reaction a beta-D-Gal-(1-&gt;4)-beta-D-Glc-(1&lt;-&gt;1)-Cer(d18:1(4E)) + UDP-N-acetyl-alpha-D-glucosamine = a beta-D-GlcNAc-(1-&gt;3)-beta-D-Gal-(1-&gt;4)-beta-D-Glc-(1&lt;-&gt;1)-Cer(d18:1(4E)) + UDP + H(+). The catalysed reaction is a neolactoside nLc4Cer(d18:1(4E)) + UDP-N-acetyl-alpha-D-glucosamine = a neolactoside IV(3)-beta-GlcNAc-nLc4Cer(d18:1(4E)) + UDP + H(+). It functions in the pathway protein modification; protein glycosylation. Beta-1,3-N-acetylglucosaminyltransferase that plays a key role in the synthesis of lacto- or neolacto-series carbohydrate chains on glycolipids. The polypeptide is Lactosylceramide 1,3-N-acetyl-beta-D-glucosaminyltransferase B (b3gnt5-b) (Xenopus laevis (African clawed frog)).